The sequence spans 371 residues: MLKGGAVWALGTMSGTSLDGVDAAMVLTDGERILEFGETRYRAYSEAERAVLRAALGRWPGEAAVAEAAEVVEAAHAELLAAFRGAEIVGFHGQTLAHEPGGRGTHQAGSGERLAQALGVPVVWDFRSADVAAGGQGAPLAPFYHFACARRAGADRPVAFLNLGGVGNLTWVDPRQAAPEAPGACLAFDTGPANAPINDLMQARLGRSHDEGGRLAAEGEVAEAVLARFLDHAFFARMPPKSLDRDAFADLLPAVADLSDADAAATLTAAAAAAVARGAAHFPTPVRQLLVTGGGRHNPVLMAMLEARTGIEVVPVEQAGLDGDMLEAQAFAYLAVRVARGLPTSAPSTTGVPACLGGGRMSRPEALALQP.

An ATP-binding site is contributed by 15–22 (GTSLDGVD).

It belongs to the anhydro-N-acetylmuramic acid kinase family.

The catalysed reaction is 1,6-anhydro-N-acetyl-beta-muramate + ATP + H2O = N-acetyl-D-muramate 6-phosphate + ADP + H(+). It participates in amino-sugar metabolism; 1,6-anhydro-N-acetylmuramate degradation. The protein operates within cell wall biogenesis; peptidoglycan recycling. Functionally, catalyzes the specific phosphorylation of 1,6-anhydro-N-acetylmuramic acid (anhMurNAc) with the simultaneous cleavage of the 1,6-anhydro ring, generating MurNAc-6-P. Is required for the utilization of anhMurNAc either imported from the medium or derived from its own cell wall murein, and thus plays a role in cell wall recycling. This is Anhydro-N-acetylmuramic acid kinase from Cereibacter sphaeroides (strain ATCC 17023 / DSM 158 / JCM 6121 / CCUG 31486 / LMG 2827 / NBRC 12203 / NCIMB 8253 / ATH 2.4.1.) (Rhodobacter sphaeroides).